Here is a 501-residue protein sequence, read N- to C-terminus: AKT kinase-transforming protein (501 aa).

Positions 26 to 129 constitute a PH domain; it reads AIVKEGWLHK…WATAIQTVAD (104 aa). The segment at 135–158 is disordered; sequence EEETMDFRSGSPSDNSGAEEMEVS. The Protein kinase domain maps to 171–429; that stretch reads FEYLKLLGKG…AKEIMQHRFF (259 aa). ATP contacts are provided by residues 177–185 and Lys-200; that span reads LGKGTFGKV. Asp-295 (proton acceptor) is an active-site residue. Tyr-347 is modified (phosphotyrosine). One can recognise an AGC-kinase C-terminal domain in the interval 430–501; sequence ANIVWQDVYE…QFSYSASGTA (72 aa). Residues 471–501 are disordered; it reads TPPDQDDSMECVDSERRPHFPQFSYSASGTA.

It belongs to the protein kinase superfamily. AGC Ser/Thr protein kinase family. RAC subfamily. Interacts with mouse THEM4. In terms of processing, autophosphorylated on threonine and serine residues.

It carries out the reaction L-seryl-[protein] + ATP = O-phospho-L-seryl-[protein] + ADP + H(+). The catalysed reaction is L-threonyl-[protein] + ATP = O-phospho-L-threonyl-[protein] + ADP + H(+). This Mus musculus (Mouse) protein is AKT kinase-transforming protein (V-AKT).